The primary structure comprises 430 residues: Maltoporin (430 aa).

The first 23 residues, 1–23 (MNNKKTLLAVAISGMMFATSAAA), serve as a signal peptide directing secretion.

It belongs to the porin LamB (TC 1.B.3) family. As to quaternary structure, homotrimer formed of three 18-stranded antiparallel beta-barrels, containing three independent channels.

The protein resides in the cell outer membrane. The catalysed reaction is beta-maltose(in) = beta-maltose(out). Its function is as follows. Involved in the transport of maltose and maltodextrins. This chain is Maltoporin, found in Actinobacillus succinogenes (strain ATCC 55618 / DSM 22257 / CCUG 43843 / 130Z).